Reading from the N-terminus, the 134-residue chain is uncharacterized protein (134 aa).

This is an uncharacterized protein from Homo sapiens (Human).